The sequence spans 38 residues: MTKPNPNKQSVELNRTSLYWGLLLIFVLAVLFSNYFFN.

Residues 17 to 37 form a helical membrane-spanning segment; sequence SLYWGLLLIFVLAVLFSNYFF.

Belongs to the PsbL family. In terms of assembly, PSII is composed of 1 copy each of membrane proteins PsbA, PsbB, PsbC, PsbD, PsbE, PsbF, PsbH, PsbI, PsbJ, PsbK, PsbL, PsbM, PsbT, PsbX, PsbY, PsbZ, Psb30/Ycf12, at least 3 peripheral proteins of the oxygen-evolving complex and a large number of cofactors. It forms dimeric complexes.

Its subcellular location is the plastid. It localises to the chloroplast thylakoid membrane. Its function is as follows. One of the components of the core complex of photosystem II (PSII). PSII is a light-driven water:plastoquinone oxidoreductase that uses light energy to abstract electrons from H(2)O, generating O(2) and a proton gradient subsequently used for ATP formation. It consists of a core antenna complex that captures photons, and an electron transfer chain that converts photonic excitation into a charge separation. This subunit is found at the monomer-monomer interface and is required for correct PSII assembly and/or dimerization. The polypeptide is Photosystem II reaction center protein L (Huperzia lucidula (Shining clubmoss)).